A 444-amino-acid polypeptide reads, in one-letter code: MARTRNRLDRTPFQTAVTDLSHDGRGVARRDGEGGKVTFISGALPGELVRAEPTARSRHFDEAKTVGVLEASPQRVTPRCPHFGVCAGCVLQHLEESQQIVAKQRVLMDNLERIGHVTPQAVLPALTGDNWGYRRKGRFSVRRVEKKDKTLVGFRELDPRFVADLSVCYTVIPQIGEKIPLLAALIEGMDGKRDIPQIEFIAGDDAVALTIRHMQPLSERDRQAWITFAQEHGFAIFLQPGGVDSVQPLWPQEVPLSFRLPQWDVELAFRPLDFIQVNASLNQKMIAHAVALLEAKPDDRVLDLFCGLGNFTLPLARVVREVVGVEGDAGLVARAKENAQRNGLDNAQFYAADLTQDQRSAPWMRQGFDKLLLDPPRSGALEVLQQLPLKTFQRIVYVSCHPGSLARDAGYLVNEQGFTLVSAGAMDMFPHTAHVESIAVFERR.

Residues R5–G67 enclose the TRAM domain. 4 residues coordinate [4Fe-4S] cluster: C80, C86, C89, and C168. 6 residues coordinate S-adenosyl-L-methionine: Q276, F305, N310, E326, D353, and D374. C400 functions as the Nucleophile in the catalytic mechanism.

This sequence belongs to the class I-like SAM-binding methyltransferase superfamily. RNA M5U methyltransferase family. RlmD subfamily.

The enzyme catalyses uridine(1939) in 23S rRNA + S-adenosyl-L-methionine = 5-methyluridine(1939) in 23S rRNA + S-adenosyl-L-homocysteine + H(+). Functionally, catalyzes the formation of 5-methyl-uridine at position 1939 (m5U1939) in 23S rRNA. The chain is 23S rRNA (uracil(1939)-C(5))-methyltransferase RlmD from Xanthomonas axonopodis pv. citri (strain 306).